The chain runs to 86 residues: Large ribosomal subunit protein eL20 (86 aa).

This sequence belongs to the eukaryotic ribosomal protein eL20 family. As to quaternary structure, part of the 50S ribosomal subunit. Binds 23S rRNA.

This chain is Large ribosomal subunit protein eL20, found in Saccharolobus islandicus (strain Y.N.15.51 / Yellowstone #2) (Sulfolobus islandicus).